A 359-amino-acid chain; its full sequence is Glycerol-1-phosphate dehydrogenase [NAD(P)+] (359 aa).

Residues 107–111 and 129–132 contribute to the NAD(+) site; these read GRVID and TAAS. Asp-134 is a binding site for substrate. NAD(+) is bound at residue Ser-138. Position 181 (Asp-181) interacts with substrate. Zn(2+)-binding residues include Asp-181 and His-261. Substrate is bound at residue His-265. His-277 contacts Zn(2+).

This sequence belongs to the glycerol-1-phosphate dehydrogenase family. It depends on Zn(2+) as a cofactor.

It is found in the cytoplasm. It carries out the reaction sn-glycerol 1-phosphate + NAD(+) = dihydroxyacetone phosphate + NADH + H(+). The catalysed reaction is sn-glycerol 1-phosphate + NADP(+) = dihydroxyacetone phosphate + NADPH + H(+). It functions in the pathway membrane lipid metabolism; glycerophospholipid metabolism. Catalyzes the NAD(P)H-dependent reduction of dihydroxyacetonephosphate (DHAP or glycerone phosphate) to glycerol 1-phosphate (G1P). The G1P thus generated is used as the glycerophosphate backbone of phospholipids in the cellular membranes of Archaea. This Methanosphaerula palustris (strain ATCC BAA-1556 / DSM 19958 / E1-9c) protein is Glycerol-1-phosphate dehydrogenase [NAD(P)+].